A 242-amino-acid chain; its full sequence is Probable transcriptional regulatory protein XCV3282 (242 aa).

This sequence belongs to the TACO1 family.

Its subcellular location is the cytoplasm. This Xanthomonas euvesicatoria pv. vesicatoria (strain 85-10) (Xanthomonas campestris pv. vesicatoria) protein is Probable transcriptional regulatory protein XCV3282.